The sequence spans 284 residues: Transmembrane protein 163b (284 aa).

The disordered stretch occupies residues 1–44; that stretch reads MTDSSSASDPTAGPVDPGPAPSAPDPALEDPASTPANGHHPNQA. The Cytoplasmic portion of the chain corresponds to 1 to 83; the sequence is MTDSSSASDP…HEAQSYRKKA (83 aa). The chain crosses the membrane as a helical span at residues 84–104; that stretch reads LWVSWVSIVVTMILAIAAFTV. Residues 105–111 are Extracellular-facing; that stretch reads SIMRHSA. A helical transmembrane segment spans residues 112–132; that stretch reads SAFGFAFDATLDVLSSIIVLW. The Cytoplasmic segment spans residues 133-145; sequence RYSNAAAVHSAHR. Residues 146–166 form a helical membrane-spanning segment; sequence EYIACVILGVVFILSAITILV. The Extracellular segment spans residues 167-182; the sequence is KAIHDLATKLEPEVDD. The helical transmembrane segment at 183–203 threads the bilayer; the sequence is FLYSVSVISGVVCTVLCVCKF. Residues 204–212 are Cytoplasmic-facing; that stretch reads MLGKVLTSR. Residues 213 to 233 traverse the membrane as a helical segment; sequence ALITDGFNSLVGGVMGFSILI. The Extracellular portion of the chain corresponds to 234-243; that stretch reads SAEVFKHEPS. Residues 244–264 form a helical membrane-spanning segment; that stretch reads VWFLDGTIGILIGLIILAYGV. The Cytoplasmic portion of the chain corresponds to 265–284; that stretch reads KLLKDMVPRIRQTRHYERFE.

It belongs to the TMEM163 family.

It localises to the cytoplasmic vesicle. Its subcellular location is the secretory vesicle. It is found in the synaptic vesicle membrane. The protein localises to the early endosome membrane. The protein resides in the late endosome membrane. It localises to the lysosome membrane. Its subcellular location is the cell membrane. The enzyme catalyses Zn(2+)(in) = Zn(2+)(out). Functionally, zinc ion transporter that mediates zinc efflux and plays a crucial role in intracellular zinc homeostasis. Binds the divalent cations Zn(2+), Ni(2+), and to a minor extent Cu(2+). Is a functional modulator of P2X purinoceptors, including P2RX1, P2RX3, P2RX4 and P2RX7. Plays a role in central nervous system development and is required for myelination, and survival and proliferation of oligodendrocytes. The polypeptide is Transmembrane protein 163b (Danio rerio (Zebrafish)).